Consider the following 390-residue polypeptide: GTPase Obg (390 aa).

An Obg domain is found at 1–159; that stretch reads MKFVDEASIL…RELLLELMLL (159 aa). A disordered region spans residues 127–147; that stretch reads NTRFKSSVNRTPRQKTNGTPG. Positions 129 to 145 are enriched in polar residues; it reads RFKSSVNRTPRQKTNGT. In terms of domain architecture, OBG-type G spans 160-333; the sequence is ADVGMLGMPN…LCWDVMTFII (174 aa). GTP contacts are provided by residues 166–173, 191–195, 213–216, 283–286, and 314–316; these read GMPNAGKS, FTTLV, DIPG, NKID, and SAA. Mg(2+) is bound by residues S173 and T193.

The protein belongs to the TRAFAC class OBG-HflX-like GTPase superfamily. OBG GTPase family. Monomer. It depends on Mg(2+) as a cofactor.

The protein resides in the cytoplasm. In terms of biological role, an essential GTPase which binds GTP, GDP and possibly (p)ppGpp with moderate affinity, with high nucleotide exchange rates and a fairly low GTP hydrolysis rate. Plays a role in control of the cell cycle, stress response, ribosome biogenesis and in those bacteria that undergo differentiation, in morphogenesis control. The chain is GTPase Obg from Escherichia coli O157:H7.